The sequence spans 606 residues: MPSSVTALGQARSSGPGMAPSACCCSPAALQRRLPILAWLPSYSLQWLKMDFVAGLSVGLTAIPQALAYAEVAGLPPQYGLYSAFMGCFVYFFLGTSRDVTLGPTAIMSLLVSFYTFHEPAYAVLLAFLSGCIQLAMGVLRLGFLLDFISYPVIKGFTSAAAVTIGFGQIKNLLGLQNIPRPFFLQVYHTFLRIAETRVGDAVLGLVCMLLLLVLKLMRDHVPPVHPEMPPGVRLSRGLVWAATTARNALVVSFAALVAYSFEVTGYQPFILTGETAEGLPPVRIPPFSVTTANGTISFTEMVQDMGAGLAVVPLMGLLESIAVAKAFASQNNYRIDANQELLAIGLTNMLGSLVSSYPVTGSFGRTAVNAQSGVCTPAGGLVTGVLVLLSLDYLTSLFYYIPKSALAAVIIMAVAPLFDTKIFRTLWRVKRLDLLPLCVTFLLCFWEVQYGILAGALVSLLMLLHSAARPETKVSEGPVLVLQPASGLSFPAMEALREEILSRALEVSPPRCLVLECTHVCSIDYTVVLGLGELLQDFQKQGVALAFVGLQVPVLRVLLSADLKGFQYFSTLEEAEKHLRQEPGTQPYNIREDSILDQKVALLKA.

Over 1–51 the chain is Extracellular; the sequence is MPSSVTALGQARSSGPGMAPSACCCSPAALQRRLPILAWLPSYSLQWLKMD. The helical transmembrane segment at 52–72 threads the bilayer; the sequence is FVAGLSVGLTAIPQALAYAEV. A topological domain (cytoplasmic) is located at residue Ala-73. A helical transmembrane segment spans residues 74-94; that stretch reads GLPPQYGLYSAFMGCFVYFFL. Topologically, residues 95–100 are extracellular; sequence GTSRDV. Residues 101 to 117 form a helical membrane-spanning segment; that stretch reads TLGPTAIMSLLVSFYTF. Residues 118–119 lie on the Cytoplasmic side of the membrane; that stretch reads HE. The helical transmembrane segment at 120–140 threads the bilayer; it reads PAYAVLLAFLSGCIQLAMGVL. At 141–147 the chain is on the extracellular side; the sequence is RLGFLLD. The chain crosses the membrane as a helical span at residues 148 to 168; the sequence is FISYPVIKGFTSAAAVTIGFG. The Cytoplasmic portion of the chain corresponds to 169-197; that stretch reads QIKNLLGLQNIPRPFFLQVYHTFLRIAET. A helical transmembrane segment spans residues 198–218; that stretch reads RVGDAVLGLVCMLLLLVLKLM. At 219–250 the chain is on the extracellular side; sequence RDHVPPVHPEMPPGVRLSRGLVWAATTARNAL. A helical transmembrane segment spans residues 251–271; sequence VVSFAALVAYSFEVTGYQPFI. Over 272–307 the chain is Cytoplasmic; sequence LTGETAEGLPPVRIPPFSVTTANGTISFTEMVQDMG. A helical membrane pass occupies residues 308 to 328; that stretch reads AGLAVVPLMGLLESIAVAKAF. The Extracellular segment spans residues 329–341; the sequence is ASQNNYRIDANQE. The chain crosses the membrane as a helical span at residues 342–362; sequence LLAIGLTNMLGSLVSSYPVTG. The Cytoplasmic portion of the chain corresponds to 363–374; sequence SFGRTAVNAQSG. Residues 375 to 395 form a helical membrane-spanning segment; that stretch reads VCTPAGGLVTGVLVLLSLDYL. The Extracellular segment spans residues 396-398; it reads TSL. The chain crosses the membrane as a helical span at residues 399 to 419; it reads FYYIPKSALAAVIIMAVAPLF. Residues 420 to 441 are Cytoplasmic-facing; that stretch reads DTKIFRTLWRVKRLDLLPLCVT. Residues 442–462 traverse the membrane as a helical segment; the sequence is FLLCFWEVQYGILAGALVSLL. The Extracellular segment spans residues 463 to 606; that stretch reads MLLHSAARPE…LDQKVALLKA (144 aa). The 115-residue stretch at 470 to 584 folds into the STAS domain; sequence RPETKVSEGP…EAEKHLRQEP (115 aa).

This sequence belongs to the SLC26A/SulP transporter (TC 2.A.53) family. As to expression, detected in all tissues tested with highest expression observed in brain, kidney, HEVEC and placenta and lowest in pancreas, skeletal muscle, liver, lung and heart.

The protein localises to the cell membrane. It localises to the lysosome membrane. It is found in the apical cell membrane. Its subcellular location is the basolateral cell membrane. It catalyses the reaction hydrogencarbonate(in) + chloride(out) = hydrogencarbonate(out) + chloride(in). It carries out the reaction sulfate(in) + H(+)(in) = sulfate(out) + H(+)(out). The enzyme catalyses oxalate(in) + chloride(out) = oxalate(out) + chloride(in). In terms of biological role, sodium-independent anion exchanger mediating bicarbonate, chloride, sulfate and oxalate transport. Exhibits sodium-independent sulfate anion transporter activity that may cooperate with SLC26A2 to mediate DIDS-sensitive sulfate uptake into high endothelial venules endothelial cells (HEVEC). In the kidney, mediates chloride-bicarbonate exchange, facilitating V-ATPase-mediated acid secretion. May function as a chloride channel, playing an important role in moderating chloride homeostasis and neuronal activity in the cerebellum. This chain is Sodium-independent sulfate anion transporter, found in Homo sapiens (Human).